Here is a 62-residue protein sequence, read N- to C-terminus: Protein CYSTEINE-RICH TRANSMEMBRANE MODULE 2 (62 aa).

Transmembrane regions (helical) follow at residues 23 to 39 (VAVA…AAFD) and 33 to 53 (VVAA…LSLI).

Belongs to the CYSTM1 family. In terms of assembly, heterodimers. Binds weakly to CYSTM7 and WIH1/CYSTM13. As to expression, mostly expressed in stems, siliques, leaves and flowers and, to a lower extent, in roots.

The protein localises to the cell membrane. It localises to the nucleus. It is found in the secreted. Its subcellular location is the cell wall. Functionally, involved in resistance to abiotic stress. Its function is as follows. Confers resistance to heavy metal ions (e.g. cadmium (CdCl(2)) and copper (CuCl(2))) by chelating them at the plasma membrane of root cells, thus stopping their entry and reducing their accumulation. The polypeptide is Protein CYSTEINE-RICH TRANSMEMBRANE MODULE 2 (Arabidopsis thaliana (Mouse-ear cress)).